The primary structure comprises 151 residues: Neuroglobin (151 aa).

One can recognise a Globin domain in the interval 1–149 (MERPESELIR…VVQAMSRGWD (149 aa)). Heme b contacts are provided by histidine 64 and histidine 96.

It belongs to the globin family. As to quaternary structure, monomer. Homodimer and homotetramer; disulfide-linked. Mainly monomeric but also detected as part of homodimers and homotetramers. Interacts with 14-3-3 proteins; regulates the phosphorylation of NGB. Could interact (ferrous form) with G-alpha(i) proteins (GTP-bound form). In terms of processing, phosphorylated during hypoxia by ERK1/ERK2. Phosphorylation regulates the heme pocket hexacoordination preventing the association of His-64 with the heme metal center. Thereby, promotes the access of dioxygen and nitrite to the heme and stimulates the nitrite reductase activity. Phosphorylation during hypoxia is stabilized by 14-3-3 proteins. Widely distributed throughout the adult brain, including cerebral cortex, hippocampus, thalamus, hypothalamus, olfactory bulb, and cerebellum.

Its subcellular location is the cytoplasm. The protein localises to the cytosol. It localises to the mitochondrion matrix. The enzyme catalyses Fe(III)-heme b-[protein] + nitric oxide + H2O = Fe(II)-heme b-[protein] + nitrite + 2 H(+). In terms of biological role, monomeric globin with a bis-histidyl six-coordinate heme-iron atom through which it can bind dioxygen, carbon monoxide and nitric oxide. Could help transport oxygen and increase its availability to the metabolically active neuronal tissues, though its low quantity in tissues as well as its high affinity for dioxygen, which may limit its oxygen-releasing ability, argue against it. The ferrous/deoxygenated form exhibits a nitrite reductase activity and it could produce nitric oxide which in turn inhibits cellular respiration in response to hypoxia. In its ferrous/deoxygenated state, it may also exhibit GDI (Guanine nucleotide Dissociation Inhibitor) activity toward heterotrimeric G-alpha proteins, thereby regulating signal transduction to facilitate neuroprotective responses in the wake of hypoxia and associated oxidative stress. The sequence is that of Neuroglobin from Rattus norvegicus (Rat).